The sequence spans 90 residues: Antitoxin epsilon 1 (90 aa).

Belongs to the epsilon antitoxin family. As to quaternary structure, in the presence of the zeta toxin, forms an inactive PezA(2)PezT(2) heterotetramer.

Functionally, antitoxin component of a type II toxin-antitoxin (TA) system. Neutralizes the toxic effect of zeta toxin. Part of a postsegregational killing (PSK) system involved in the killing of plasmid-free cells. Continuous synthesis of the epsilon antitoxin is required to counteract the zeta toxin. In Enterococcus faecalis (Streptococcus faecalis), this protein is Antitoxin epsilon 1.